A 208-amino-acid polypeptide reads, in one-letter code: 7-carboxy-7-deazaguanine synthase (208 aa).

Substrate contacts are provided by residues 23–25 (LQG) and R38. Residues 29-208 (WAGGNAFFIR…LQTHKYLGVR (180 aa)) enclose the Radical SAM core domain. [4Fe-4S] cluster-binding residues include C42, C46, and C49. A substrate-binding site is contributed by T83. S-adenosyl-L-methionine contacts are provided by residues G85 and 126–128 (SPK).

This sequence belongs to the radical SAM superfamily. 7-carboxy-7-deazaguanine synthase family. Homodimer. The cofactor is [4Fe-4S] cluster. S-adenosyl-L-methionine serves as cofactor. It depends on Mg(2+) as a cofactor.

It catalyses the reaction 6-carboxy-5,6,7,8-tetrahydropterin + H(+) = 7-carboxy-7-deazaguanine + NH4(+). Its pathway is purine metabolism; 7-cyano-7-deazaguanine biosynthesis. Catalyzes the complex heterocyclic radical-mediated conversion of 6-carboxy-5,6,7,8-tetrahydropterin (CPH4) to 7-carboxy-7-deazaguanine (CDG), a step common to the biosynthetic pathways of all 7-deazapurine-containing compounds. In Synechocystis sp. (strain ATCC 27184 / PCC 6803 / Kazusa), this protein is 7-carboxy-7-deazaguanine synthase.